Reading from the N-terminus, the 320-residue chain is ATP-dependent 6-phosphofructokinase isozyme 1 (320 aa).

Glycine 12 is a binding site for ATP. Residues 22 to 26 (RGVVR) and 55 to 60 (RYSVSD) contribute to the ADP site. ATP is bound by residues 73-74 (RF) and 103-106 (GDGS). A Mg(2+)-binding site is contributed by aspartate 104. 126-128 (TID) is a substrate binding site. Residue aspartate 128 is the Proton acceptor of the active site. Arginine 155 is an ADP binding site. Substrate is bound by residues arginine 163 and 170 to 172 (MGR). Residues 186–188 (GCE), lysine 212, and 214–216 (KKH) each bind ADP. Substrate contacts are provided by residues glutamate 223, arginine 244, and 250 to 253 (HIQR).

Belongs to the phosphofructokinase type A (PFKA) family. ATP-dependent PFK group I subfamily. Prokaryotic clade 'B1' sub-subfamily. Homotetramer. It depends on Mg(2+) as a cofactor.

The protein resides in the cytoplasm. It catalyses the reaction beta-D-fructose 6-phosphate + ATP = beta-D-fructose 1,6-bisphosphate + ADP + H(+). Its pathway is carbohydrate degradation; glycolysis; D-glyceraldehyde 3-phosphate and glycerone phosphate from D-glucose: step 3/4. Its activity is regulated as follows. Allosterically activated by ADP and other diphosphonucleosides, and allosterically inhibited by phosphoenolpyruvate. Catalyzes the phosphorylation of D-fructose 6-phosphate to fructose 1,6-bisphosphate by ATP, the first committing step of glycolysis. The chain is ATP-dependent 6-phosphofructokinase isozyme 1 from Shigella boydii serotype 18 (strain CDC 3083-94 / BS512).